A 440-amino-acid chain; its full sequence is 3-phosphoshikimate 1-carboxyvinyltransferase (440 aa).

3-phosphoshikimate contacts are provided by lysine 25, serine 26, and arginine 30. Residue lysine 25 coordinates phosphoenolpyruvate. Positions 96 and 124 each coordinate phosphoenolpyruvate. Residues serine 168, glutamine 169, aspartate 310, and lysine 337 each contribute to the 3-phosphoshikimate site. Glutamine 169 lines the phosphoenolpyruvate pocket. Aspartate 310 functions as the Proton acceptor in the catalytic mechanism. Positions 341, 382, and 409 each coordinate phosphoenolpyruvate.

It belongs to the EPSP synthase family. As to quaternary structure, monomer.

It localises to the cytoplasm. It carries out the reaction 3-phosphoshikimate + phosphoenolpyruvate = 5-O-(1-carboxyvinyl)-3-phosphoshikimate + phosphate. It participates in metabolic intermediate biosynthesis; chorismate biosynthesis; chorismate from D-erythrose 4-phosphate and phosphoenolpyruvate: step 6/7. Catalyzes the transfer of the enolpyruvyl moiety of phosphoenolpyruvate (PEP) to the 5-hydroxyl of shikimate-3-phosphate (S3P) to produce enolpyruvyl shikimate-3-phosphate and inorganic phosphate. This Chlamydia trachomatis serovar L2 (strain ATCC VR-902B / DSM 19102 / 434/Bu) protein is 3-phosphoshikimate 1-carboxyvinyltransferase.